Reading from the N-terminus, the 455-residue chain is MNPVSPRSLTLIGAGLAGCLLAILLSRRGWQITVYERRGDPRIKGYECGRSINLALAERGRHALRQAGAEEVVMAKAVMMRGRMVHPLVGEPQLQRYGRDDSEVIWSIHRAALNVALLDLAEQAGARVHFYRRLHTVDFDAGYARFIDDRDDQPHEIHFQSLIGSDGAGSALRAAMQRKSPLGERTEFLDHSYKELEIPPLPGGGFRIEGNALHIWPRGRYMFIALPNDGGTFTVTLFLPNAGEPSFATTRNGDEAFALFARDFPDALPLIPQLKQHWEEHPPGLLGTLTLDRWHLDGRALLIGDAAHAMVPFHGQGMNCAFEDCVALADQLDAHDDLASAFAAFEAARRDDAGAIQQMALENYLEMRDRVDDPEFLLQRQLEQQLQARWPTRFVPHYTMVTFLRTRYSIALARSEIQREILVEATRGHSDLSRLDWAALETIVHARLEPLDGAH.

This sequence belongs to the aromatic-ring hydroxylase family. KMO subfamily. FAD serves as cofactor.

The enzyme catalyses L-kynurenine + NADPH + O2 + H(+) = 3-hydroxy-L-kynurenine + NADP(+) + H2O. Its pathway is cofactor biosynthesis; NAD(+) biosynthesis; quinolinate from L-kynurenine: step 1/3. Its function is as follows. Catalyzes the hydroxylation of L-kynurenine (L-Kyn) to form 3-hydroxy-L-kynurenine (L-3OHKyn). Required for synthesis of quinolinic acid. In Xanthomonas oryzae pv. oryzae (strain KACC10331 / KXO85), this protein is Kynurenine 3-monooxygenase.